Consider the following 505-residue polypeptide: Maturase K (505 aa).

Belongs to the intron maturase 2 family. MatK subfamily.

The protein resides in the plastid. The protein localises to the chloroplast. Functionally, usually encoded in the trnK tRNA gene intron. Probably assists in splicing its own and other chloroplast group II introns. The chain is Maturase K from Coffea arabica (Arabian coffee).